The primary structure comprises 42 residues: Conodipine-M beta chain (42 aa).

As to quaternary structure, heterodimer of an alpha and a beta chains; probably disulfide-linked. As to expression, expressed by the venom duct.

It is found in the secreted. In terms of biological role, heterodimer: conodipine-M catalyzes the calcium-dependent hydrolysis of the 2-acyl groups in 3-sn-phosphoglycerides. This activity may be supported by the alpha chain. Conodipine-M inhibits the binding of isradipine (a ligand specific for L-type calcium channel) to L-type calcium channels. The protein is Conodipine-M beta chain of Conus magus (Magical cone).